Here is a 321-residue protein sequence, read N- to C-terminus: MATGTQQKENTLLHLFAGGCGGTVGAIFTCPLEVIKTRLQSSRLALRTVYYPQVHLGTISGAGVVRQTSVTPGLLQVLKSILEKEGPRSLFRGLGPNLVGVAPSRAVYFACYSKAKEQFNGVFVPNSNIVHVFSAGSAAFVTNSLMNPIWMVKTRMQLERKVRGSKQMNTLQCARYVYQTEGIRGFYRGLTASYAGISETIICFAIYESLKKYLKEAPLASSTNGTEKNSTNFFGLMAAAALSKGCASCVAYPHEVIRTRLREEGSKYKSFVQTARLVFREEGYLAFYRGLFAQLIRQIPNTAIVLSTYELIVYLLEDHAQ.

Solcar repeat units lie at residues 9-118 (ENTL…AKEQ), 126-213 (NSNI…LKKY), and 231-315 (TNFF…IVYL). Helical transmembrane passes span 12–32 (LLHL…TCPL), 49–65 (VYYP…AGVV), 121–141 (GVFV…AAFV), 190–210 (LTAS…YESL), 233–253 (FFGL…VAYP), and 298–318 (QIPN…LLED).

It belongs to the mitochondrial carrier (TC 2.A.29) family.

Its subcellular location is the mitochondrion inner membrane. It carries out the reaction UTP(in) + UDP(out) = UTP(out) + UDP(in). It catalyses the reaction dUTP(out) + UTP(in) = dUTP(in) + UTP(out). The catalysed reaction is 5-methyl-UTP(out) + UTP(in) = 5-methyl-UTP(in) + UTP(out). The enzyme catalyses 5-methyl-UDP(out) + UTP(in) = 5-methyl-UDP(in) + UTP(out). It carries out the reaction UTP(in) + CTP(out) = UTP(out) + CTP(in). It catalyses the reaction CDP(out) + UTP(in) = CDP(in) + UTP(out). The catalysed reaction is dCTP(out) + UTP(in) = dCTP(in) + UTP(out). The enzyme catalyses dCDP(out) + UTP(in) = dCDP(in) + UTP(out). It carries out the reaction UTP(in) + GTP(out) = UTP(out) + GTP(in). It catalyses the reaction UTP(in) + GDP(out) = UTP(out) + GDP(in). The catalysed reaction is dGTP(out) + UTP(in) = dGTP(in) + UTP(out). The enzyme catalyses dGDP(out) + UTP(in) = dGDP(in) + UTP(out). It carries out the reaction ITP(out) + UTP(in) = ITP(in) + UTP(out). Its function is as follows. Mitochondrial transporter that imports/exports pyrimidine nucleotides into and from mitochondria. Selectively transports uridine, thymidine, guanosine, cytosine and inosine (deoxy)nucleoside di- and triphosphates by an antiport mechanism. May import (deoxy)nucleoside triphosphates in exchange for intramitochondrial (deoxy)nucleoside diphosphates, thus providing precursors necessary for de novo synthesis of mitochondrial DNA and RNA while exporting products of their catabolism. Participates in mitochondrial genome maintenance, regulation of mitochondrial membrane potential and mitochondrial respiration. Upon INS or IGF1 stimulation regulates cell growth and proliferation by controlling mitochondrial DNA replication and transcription, the ratio of mitochondria-to nuclear-encoded components of the electron transport chain resulting in control of mitochondrial ROS production. Participates in dendritic cell endocytosis and may associate with mitochondrial oxidative phosphorylation. In Bos taurus (Bovine), this protein is Solute carrier family 25 member 33 (SLC25A33).